The primary structure comprises 344 residues: MRWAVLGGGHWGTALAVYLLRQRHMVQLWGRRAERLPCQPGRTDLFPVFPECARPEGLHCTVDLAAAVQGGEGIVLAVPSHALRGLLTHLLPCLPSTALFVLASKGLEVPSALRLDQVLREILPEAPLVVLSGPSFAHDLMLGKPLAMTAASTDPTYAQRVAEAFGSAQMRVYTSDDVAGVCLGGAIKNVLAIAAGISDGLGNGDSARAALITRGMAELHRLGTALGGRTETFMGLAGAGDLILTSCSDLSRNRRVGLGLGSGLSLEAVLRGIGEEAEGVRTAQALFQLAQSLGVDMPITEQVYRVLFEGAAPRAASDELMRRALRSELHVSDDGTPGGAARTE.

Positions 11, 31, 32, and 105 each coordinate NADPH. 3 residues coordinate sn-glycerol 3-phosphate: Lys105, Gly133, and Ser135. Position 137 (Ala137) interacts with NADPH. Sn-glycerol 3-phosphate contacts are provided by Lys188, Asp241, Ser251, Arg252, and Asn253. Residue Lys188 is the Proton acceptor of the active site. An NADPH-binding site is contributed by Arg252. Glu278 is an NADPH binding site.

The protein belongs to the NAD-dependent glycerol-3-phosphate dehydrogenase family.

The protein resides in the cytoplasm. It carries out the reaction sn-glycerol 3-phosphate + NAD(+) = dihydroxyacetone phosphate + NADH + H(+). It catalyses the reaction sn-glycerol 3-phosphate + NADP(+) = dihydroxyacetone phosphate + NADPH + H(+). The protein operates within membrane lipid metabolism; glycerophospholipid metabolism. Functionally, catalyzes the reduction of the glycolytic intermediate dihydroxyacetone phosphate (DHAP) to sn-glycerol 3-phosphate (G3P), the key precursor for phospholipid synthesis. This Acidithiobacillus ferrooxidans (strain ATCC 23270 / DSM 14882 / CIP 104768 / NCIMB 8455) (Ferrobacillus ferrooxidans (strain ATCC 23270)) protein is Glycerol-3-phosphate dehydrogenase [NAD(P)+].